The chain runs to 401 residues: 1-deoxy-D-xylulose 5-phosphate reductoisomerase (401 aa).

NADPH-binding residues include threonine 10, glycine 11, serine 12, isoleucine 13, glycine 36, asparagine 38, and asparagine 124. Residue lysine 125 participates in 1-deoxy-D-xylulose 5-phosphate binding. Glutamate 126 is an NADPH binding site. Aspartate 150 contacts Mn(2+). Positions 151, 152, 186, and 209 each coordinate 1-deoxy-D-xylulose 5-phosphate. Glutamate 152 is a Mn(2+) binding site. Glycine 215 serves as a coordination point for NADPH. Positions 222, 227, 228, and 231 each coordinate 1-deoxy-D-xylulose 5-phosphate. Glutamate 231 contacts Mn(2+).

The protein belongs to the DXR family. Mg(2+) is required as a cofactor. The cofactor is Mn(2+).

It carries out the reaction 2-C-methyl-D-erythritol 4-phosphate + NADP(+) = 1-deoxy-D-xylulose 5-phosphate + NADPH + H(+). It functions in the pathway isoprenoid biosynthesis; isopentenyl diphosphate biosynthesis via DXP pathway; isopentenyl diphosphate from 1-deoxy-D-xylulose 5-phosphate: step 1/6. Functionally, catalyzes the NADPH-dependent rearrangement and reduction of 1-deoxy-D-xylulose-5-phosphate (DXP) to 2-C-methyl-D-erythritol 4-phosphate (MEP). This is 1-deoxy-D-xylulose 5-phosphate reductoisomerase from Vibrio parahaemolyticus serotype O3:K6 (strain RIMD 2210633).